Reading from the N-terminus, the 536-residue chain is 2-isopropylmalate synthase (536 aa).

In terms of domain architecture, Pyruvate carboxyltransferase spans 8–273 (VLIFDTTLRD…FFGRDPESPT (266 aa)). 4 residues coordinate Mn(2+): D17, H208, H210, and N244. The tract at residues 408-536 (QLQLVQVSCG…PQHDLIKANL (129 aa)) is regulatory domain.

The protein belongs to the alpha-IPM synthase/homocitrate synthase family. LeuA type 1 subfamily. In terms of assembly, homodimer. Requires Mn(2+) as cofactor.

The protein localises to the cytoplasm. The catalysed reaction is 3-methyl-2-oxobutanoate + acetyl-CoA + H2O = (2S)-2-isopropylmalate + CoA + H(+). Its pathway is amino-acid biosynthesis; L-leucine biosynthesis; L-leucine from 3-methyl-2-oxobutanoate: step 1/4. Functionally, catalyzes the condensation of the acetyl group of acetyl-CoA with 3-methyl-2-oxobutanoate (2-ketoisovalerate) to form 3-carboxy-3-hydroxy-4-methylpentanoate (2-isopropylmalate). This is 2-isopropylmalate synthase from Prochlorococcus marinus (strain MIT 9211).